The sequence spans 610 residues: Menin (610 aa).

An interaction with FANCD2 region spans residues 214–390 (GVAERSWLYL…SLLEAGEERP (177 aa)). Positions 460-552 (REAEAAEAEE…SPPPEGPVLT (93 aa)) are disordered. Basic and acidic residues predominate over residues 484–500 (RRESKPEEPPPPKKPAL). Phosphoserine occurs at positions 487 and 543. Residue Thr-594 is modified to Phosphothreonine.

As to quaternary structure, component of the MLL-HCF complex, at least composed of KMT2A/MLL1, MEN1, ASH2L, RBBP5, DPY30, WDR5, HCFC1 and HCFC2. Component of the menin-associated histone methyltransferase complex, at least composed of KMT2B/MLL4, MEN1, ASH2L, RBBP5, DPY30 and WDR5. Interacts with POLR2B. Interacts with POLR2A phosphorylated at 'Ser-5', but not with the unphosphorylated, nor 'Ser-2' phosphorylated POLR2A forms. Interacts with FANCD2 and DBF4. Interacts with SMAD3, but not with SMAD2, nor SMAD4. Directly interacts with NFKB1, NFKB2 and RELA. Interacts with JUND (via MBM motif); inhibits the interaction of JUND with MAPK10 and the phosphorylation of JUND by MAP kinases MAPK8 and MAPK10. Interacts with KMT2A (via MBM motif). The KMT2A-MEN1 complex interacts with PSIP1 with a greater affinity as MEN1 enhances interaction of KMT2A with PSIP1. As to expression, widely expressed, including in the pituitary, brain, large intestine, spleen, kidney, adrenal gland, ovary, testis, thymus, lung, epididymis, bone marrow, pancreatic islets and placenta.

It is found in the nucleus. Essential component of a MLL/SET1 histone methyltransferase (HMT) complex, a complex that specifically methylates 'Lys-4' of histone H3 (H3K4). Functions as a transcriptional regulator. Binds to the TERT promoter and represses telomerase expression. Represses JUND-mediated transcriptional activation on AP1 sites, as well as that mediated by NFKB subunit RELA. Positively regulates HOXC8 and HOXC6 gene expression. May be involved in normal hematopoiesis through the activation of HOXA9 expression. May be involved in DNA repair. Plays a role in TGFB1-mediated inhibition of cell-proliferation, possibly regulating SMAD3 transcriptional activity. The polypeptide is Menin (Men1) (Rattus norvegicus (Rat)).